The sequence spans 514 residues: Contact site A protein (514 aa).

The first 19 residues, 1–19 (MKFLLVLIILYNILNSAHS), serve as a signal peptide directing secretion. A globular region spans residues 20 to 453 (APTITAVSNG…EATTSTTYTI (434 aa)). Positions 21-104 (PTITAVSNGK…TGGNGLFKYT (84 aa)) constitute an IPT/TIG 1 domain. N128, N137, N207, N294, and N399 each carry an N-linked (GlcNAc...) asparagine glycan. The IPT/TIG 2 domain occupies 191-283 (PTITSITPLA…NQQPITFTYN (93 aa)). 2 stretches are compositionally biased toward low complexity: residues 446–475 (TTST…TATP) and 483–494 (STPEETEAPSSA). The disordered stretch occupies residues 446–494 (TTSTTYTIPDTPTPTDTATPSPTPTETATPSPTPKPTSTPEETEAPSSA). Tandem repeats lie at residues 462-469 (TATPSPTP) and 472-479 (TATPSPTP). The tract at residues 462 to 479 (TATPSPTPTETATPSPTP) is 2 X 8 AA repeats, Pro-rich. S492 carries the GPI-like-anchor amidated serine lipid modification. The propeptide at 493–514 (SATTLISPLSLIVIFISFVLLI) is removed in mature form.

Post-translationally, phosphorylated on serine and N-glycosylated with two types of oligosaccharide chains. In terms of processing, the GPI-like-anchor contains a phosphoceramide group, rather than a phosphatidyl group.

It is found in the cell membrane. In terms of biological role, this cell-surface glycoprotein mediates cell-cell binding via homophilic interaction. This chain is Contact site A protein (csaA), found in Dictyostelium discoideum (Social amoeba).